The chain runs to 509 residues: Dihydrolipoyl dehydrogenase, mitochondrial (509 aa).

Residues 1-35 (MQSWSRVYCSLVKRGHFSRISHGLQGVSVVPLRTY) constitute a mitochondrion transit peptide. Residue Lys66 is modified to N6-acetyllysine; alternate. Lys66 is modified (N6-succinyllysine; alternate). Residues 71 to 80 (EKNETLGGTC) and Lys89 contribute to the FAD site. Cys80 and Cys85 are disulfide-bonded. 4 positions are modified to N6-acetyllysine; alternate: Lys104, Lys122, Lys132, and Lys143. 4 positions are modified to N6-succinyllysine; alternate: Lys104, Lys122, Lys132, and Lys143. FAD is bound at residue Gly154. 2 positions are modified to N6-succinyllysine: Lys159 and Lys166. 183–185 (TGS) contacts FAD. NAD(+)-binding positions include 220-227 (GAGVIGVE) and Glu243. N6-succinyllysine is present on residues Lys273 and Lys277. Val278 provides a ligand contact to NAD(+). 2 positions are modified to phosphoserine: Ser285 and Ser297. Gly314 is an NAD(+) binding site. Residue Lys346 is modified to N6-acetyllysine. FAD-binding positions include Asp355 and 361–364 (MLAH). N6-acetyllysine; alternate is present on Lys410. The residue at position 410 (Lys410) is an N6-succinyllysine; alternate. Residues Lys417 and Lys420 each carry the N6-acetyllysine modification. The residue at position 430 (Lys430) is an N6-succinyllysine. His487 functions as the Proton acceptor in the catalytic mechanism. The residue at position 505 (Lys505) is an N6-acetyllysine; alternate. Lys505 is modified (N6-succinyllysine; alternate).

This sequence belongs to the class-I pyridine nucleotide-disulfide oxidoreductase family. Homodimer. Part of the multimeric pyruvate dehydrogenase complex that contains multiple copies of pyruvate dehydrogenase (subunits PDHA (PDHA1 or PDHA2) and PDHB, E1), dihydrolipoamide acetyltransferase (DLAT, E2) and lipoamide dehydrogenase (DLD, E3). These subunits are bound to an inner core composed of about 48 DLAT and 12 PDHX molecules (by non covalent bonds). The 2-oxoglutarate dehydrogenase complex is composed of OGDH (2-oxoglutarate dehydrogenase; E1), DLST (dihydrolipoamide succinyltransferase; E2), DLD (dihydrolipoamide dehydrogenase; E3) and the assembly factor KGD4. It contains multiple copies of the three enzymatic components (E1, E2 and E3). In the nucleus, the 2-oxoglutarate dehydrogenase complex associates with KAT2A. Interacts with PDHX. FAD is required as a cofactor. Tyrosine phosphorylated.

Its subcellular location is the mitochondrion matrix. It is found in the nucleus. The protein localises to the cell projection. It localises to the cilium. The protein resides in the flagellum. Its subcellular location is the cytoplasmic vesicle. It is found in the secretory vesicle. The protein localises to the acrosome. It catalyses the reaction N(6)-[(R)-dihydrolipoyl]-L-lysyl-[protein] + NAD(+) = N(6)-[(R)-lipoyl]-L-lysyl-[protein] + NADH + H(+). Lipoamide dehydrogenase is a component of the glycine cleavage system as well as an E3 component of three alpha-ketoacid dehydrogenase complexes (pyruvate-, alpha-ketoglutarate-, and branched-chain amino acid-dehydrogenase complex). The 2-oxoglutarate dehydrogenase complex is mainly active in the mitochondrion. A fraction of the 2-oxoglutarate dehydrogenase complex also localizes in the nucleus and is required for lysine succinylation of histones: associates with KAT2A on chromatin and provides succinyl-CoA to histone succinyltransferase KAT2A. In monomeric form may have additional moonlighting function as serine protease. Involved in the hyperactivation of spermatazoa during capacitation and in the spermatazoal acrosome reaction. This Bos taurus (Bovine) protein is Dihydrolipoyl dehydrogenase, mitochondrial (DLD).